Consider the following 194-residue polypeptide: Histone H1.0 (194 aa).

Residue methionine 1 is modified to N-acetylmethionine. Residues 1-11 (MTENSTSAPAA) show a composition bias toward low complexity. Residues 1 to 29 (MTENSTSAPAAKPKRAKASKKSTDHPKYS) form a disordered region. An N-acetylthreonine; in Histone H1.0, N-terminally processed modification is found at threonine 2. In terms of domain architecture, H15 spans 24 to 97 (DHPKYSDMVV…GASGSFRLAK (74 aa)). Residue arginine 42 is modified to Citrulline. A disordered region spans residues 84 to 194 (TKGVGASGSF…SSAKRAGKKK (111 aa)). Serine 104 carries the post-translational modification ADP-ribosylserine. A compositionally biased stretch (basic residues) spans 105–194 (VAFKKTKKEI…SSAKRAGKKK (90 aa)).

It belongs to the histone H1/H5 family. ADP-ribosylated on Ser-104 in response to DNA damage.

The protein resides in the nucleus. It is found in the chromosome. Its function is as follows. Histones H1 are necessary for the condensation of nucleosome chains into higher-order structures. The histones H1.0 are found in cells that are in terminal stages of differentiation or that have low rates of cell division. In Pongo abelii (Sumatran orangutan), this protein is Histone H1.0 (H1-0).